A 1285-amino-acid polypeptide reads, in one-letter code: Transmembrane channel-like protein 1 (1285 aa).

A disordered region spans residues 1–29; sequence MQEAARRASLRKEHTPTNEKFGDLSKQDS. Residues 1-164 lie on the Cytoplasmic side of the membrane; sequence MQEAARRASL…KIKRIESHFG (164 aa). The chain crosses the membrane as a helical span at residues 165–202; it reads SVVSSYFTFLRWIVFVNIMITLIALVFVVLPETLADSV. Residues 203-260 lie on the Extracellular side of the membrane; the sequence is ANEGRFNRTKTRKQIPANERVHADELAVVWHYDGYLRYSPLFYGYYSDDPFLGNKIKY. An N-linked (GalNAc...) asparagine glycan is attached at Asn-209. The chain crosses the membrane as a helical span at residues 261 to 292; that stretch reads ALPLAYFMVTLTIFAYSFFAILRKMAANARMS. Residues 293 to 349 lie on the Cytoplasmic side of the membrane; it reads KLSGSKAEQYIFNWKLFTGWDYTIGNSETASNTVMAVVIKLRESIADIKKDAHGKFR. Residues 350-381 traverse the membrane as a helical segment; it reads LLQFSLRVFANIIICAMLGFSIYCIIFAVQKS. Over 382–388 the chain is Extracellular; sequence QVQDDGN. A helical transmembrane segment spans residues 389-416; sequence LFTKNQVPSVVSTITHVFPMIFDLIGKM. At 417–420 the chain is on the cytoplasmic side; it reads ENYH. Residues 421–455 form a helical membrane-spanning segment; it reads PRTALRAHLGRVLILYTVNYITLIFALFEKMTALR. Over 456–667 the chain is Extracellular; the sequence is DRVNSTSTSS…NHDGHNNDIC (212 aa). The segment at 458–488 is disordered; it reads VNSTSTSSSHRTKRQQGGWNPNMQRPPPYAS. A disulfide bridge connects residues Cys-667 and Cys-816. Residues 668–705 traverse the membrane as a helical segment; sequence WETIIGQEIVKLVTMDLIFTILSILVIDLFRGLWIKYC. Positions 696-720 are required for interaction with tmie; that stretch reads LFRGLWIKYCSSWWCWDIETTFPEY. Residues 706-724 are Cytoplasmic-facing; it reads SSWWCWDIETTFPEYGEFK. Residues 725 to 745 traverse the membrane as a helical segment; sequence VAENVLHIINNQGMIWLGLFF. Over 746-748 the chain is Extracellular; that stretch reads APL. The chain crosses the membrane as a helical span at residues 749–771; that stretch reads LPAINNIKLIILMYIRGWAVMTC. The tract at residues 766–773 is required for interaction with tmie; it reads WAVMTCNV. At 772–785 the chain is on the cytoplasmic side; sequence NVPAREIFRASRSS. The chain crosses the membrane as a helical span at residues 786 to 809; that stretch reads NFYLGILLIWLLLCTLPVGFVIAS. Topologically, residues 810-852 are extracellular; sequence MSPSRSCGPFARYQHFYTVVTREIEKRVDQTVLSYIRHIASPG. A helical transmembrane segment spans residues 853–886; the sequence is VVIPIILFLILIIYFLFSLVRGLREANTDLQAQL. At 887 to 1285 the chain is on the cytoplasmic side; the sequence is VHERTEEKKK…DEDDSPRQID (399 aa). Disordered regions lie at residues 940 to 962 and 1114 to 1285; these read ADHALASDSSEESDINEDEDDER and TIKE…RQID. Acidic residues predominate over residues 948–961; the sequence is SSEESDINEDEDDE. Composition is skewed to basic and acidic residues over residues 1121–1131, 1146–1156, and 1167–1182; these read DPGKSDKKQTS, DEARALREKMK, and TVEEKPKGGKSSESEF. Acidic residues predominate over residues 1197-1208; it reads TEEENEEEETDS.

It belongs to the TMC family. In terms of assembly, homodimer. Interacts with calm-1 and tmie to form the MET channel. In terms of tissue distribution, expressed in the ASH polymodal avoidance neurons. Also expressed in other sensory neurons, including the ADF, ASE, ADL, AQR, PQR, URX and PHA cells.

The protein resides in the cell membrane. The enzyme catalyses Na(+)(in) = Na(+)(out). The catalysed reaction is Ca(2+)(in) = Ca(2+)(out). It carries out the reaction K(+)(in) = K(+)(out). In terms of biological role, pore-forming subunit of the mechanotransducer (MET) non-selective cation channel complex. The MET complex is composed of symmetric dimeric MET channels, each channel comprising two copies of pore-forming ion-conducting transmembrane TMC subunits and auxiliary proteins including the transmembrane inner ear protein/tmie, the calcium-binding protein/calm-1 and arrestin domain protein arrd-6. Sodium ions are the most permeable, whereas calcium and potassium have lower indices. Sodium-sensor ion channel that acts specifically in salt taste chemosensation. Required for salt-evoked neuronal activity and behavioral avoidance of high concentrations of NaCl. The protein is Transmembrane channel-like protein 1 (tmc-1) of Caenorhabditis elegans.